The chain runs to 879 residues: Paramyosin, long form (879 aa).

The interval 1–31 is nonhelical region; sequence MSSSQAVRSSKYSYRATSTGPGTADVNIEYI. Residue S18 is modified to Phosphoserine. Residues 32 to 858 are a coiled coil; sequence QDLSSLSRLE…IIRAKHRTFV (827 aa). A nonhelical region region spans residues 859 to 879; the sequence is TTSTVPGSQVYIQETTRTITE.

Belongs to the paramyosin family. Heterodimer of two isoforms. Post-translationally, the more-acidic and less-abundant isoform is phosphorylated. As to expression, expressed in all larval and adult muscle tissues. Expression is five times higher in tubular than in fibrillar muscles.

It is found in the cytoplasm. The protein resides in the myofibril. Functionally, paramyosin is a major structural component of many thick filaments isolated from invertebrate muscles. In Drosophila melanogaster (Fruit fly), this protein is Paramyosin, long form (Prm).